A 511-amino-acid polypeptide reads, in one-letter code: GMP synthase [glutamine-hydrolyzing] (511 aa).

The 191-residue stretch at 5 to 195 (DILVLDFGSQ…AKYACNCESV (191 aa)) folds into the Glutamine amidotransferase type-1 domain. Cys-82 acts as the Nucleophile in catalysis. Catalysis depends on residues His-169 and Glu-171. The GMPS ATP-PPase domain maps to 196-386 (WNMGSFAKTQ…LGLSKEVVYR (191 aa)). Residue 223-229 (SGGVDSS) participates in ATP binding.

Homodimer.

It carries out the reaction XMP + L-glutamine + ATP + H2O = GMP + L-glutamate + AMP + diphosphate + 2 H(+). It participates in purine metabolism; GMP biosynthesis; GMP from XMP (L-Gln route): step 1/1. Its function is as follows. Catalyzes the synthesis of GMP from XMP. The protein is GMP synthase [glutamine-hydrolyzing] of Campylobacter jejuni subsp. jejuni serotype O:23/36 (strain 81-176).